A 145-amino-acid chain; its full sequence is Aegerolysin Aa-Pri1 (145 aa).

Positions 1–8 (MDSNKDER) are excised as a propeptide.

Belongs to the aegerolysin family.

The protein is Aegerolysin Aa-Pri1 (AA-PRI1) of Cyclocybe aegerita (Black poplar mushroom).